The chain runs to 149 residues: Calmodulin (149 aa).

Residue alanine 2 is modified to N-acetylalanine. EF-hand domains lie at 8–43, 44–79, 81–116, and 117–149; these read EQIA…LGQN, PTEA…KMKE, DSEE…LGEK, and LTDE…MTSK. Aspartate 21, aspartate 23, aspartate 25, threonine 27, glutamate 32, aspartate 57, aspartate 59, asparagine 61, threonine 63, glutamate 68, aspartate 94, aspartate 96, asparagine 98, and glutamate 105 together coordinate Ca(2+). N6,N6,N6-trimethyllysine is present on lysine 116. Aspartate 130, aspartate 132, aspartate 134, glutamine 136, and glutamate 141 together coordinate Ca(2+).

The protein belongs to the calmodulin family.

Calmodulin mediates the control of a large number of enzymes, ion channels and other proteins by Ca(2+). Among the enzymes to be stimulated by the calmodulin-Ca(2+) complex are a number of protein kinases and phosphatases. The chain is Calmodulin from Suberites domuncula (Sponge).